Consider the following 182-residue polypeptide: Doublesex- and mab-3-related transcription factor C1 (182 aa).

Residue threonine 15 is modified to Phosphoserine. Residues 26–39 (AQVDTATQEESSQG) show a composition bias toward polar residues. Disordered regions lie at residues 26–48 (AQVD…QHPE) and 136–174 (QTRH…PSGH).

This sequence belongs to the DMRT family. Expressed in Sertoli cells in male testis.

The sequence is that of Doublesex- and mab-3-related transcription factor C1 (Dmrtc1) from Mus musculus (Mouse).